A 389-amino-acid chain; its full sequence is MRCRKCQLCLSALLTLLGLKVYIEWTSESWLKKAEPRGALPSPTPPNAEPTLPTNLSARLGQTGPLSSAYWNQQQRQLGVLPSTDCQTWGTVAASEILDFILYPQELRRFLLSAACRSFPLWLPAGEGSPVASCSDKDVPYLLLAVKSEPGHFAARQAVRETWGSPVAGTRLLFLLGSPLGMGGPDLRSLVTWESRRYGDLLLWDFLDVPYNRTLKDLLLLTWLSHHCPDVNFVLQVQDDAFVHIPALLEHLQTLPPTWARSLYLGEIFTQAKPLRKPGGPFYVPKTFFEGDYPAYASGGGYVISGRLAPWLLQAAARVAPFPFDDVYTGFCFRALGLAPRAHPGFLTAWPAERTRDPCAVRGLLLVHPVSPQDTIWLWRHLWVPELQC.

Residues 1 to 7 (MRCRKCQ) lie on the Cytoplasmic side of the membrane. The helical; Signal-anchor for type II membrane protein transmembrane segment at 8–24 (LCLSALLTLLGLKVYIE) threads the bilayer. Topologically, residues 25–389 (WTSESWLKKA…RHLWVPELQC (365 aa)) are lumenal. The interval 36–57 (PRGALPSPTPPNAEPTLPTNLS) is disordered. N-linked (GlcNAc...) asparagine glycosylation is found at Asn55 and Asn212.

The protein belongs to the glycosyltransferase 31 family. Interacts with B3GNT2; this interaction greatly increases B3GNT2 catalytic activity, independently of B3GNT8 enzymatic activity.

The protein resides in the golgi apparatus membrane. It participates in protein modification; protein glycosylation. In terms of biological role, beta-1,3-N-acetylglucosaminyltransferase that plays a role in the elongation of specific branch structures of multiantennary N-glycans. Has strong activity towards tetraantennary N-glycans and 2,6 triantennary glycans. In Mus musculus (Mouse), this protein is UDP-GlcNAc:betaGal beta-1,3-N-acetylglucosaminyltransferase 8.